The sequence spans 1522 residues: ATP-binding cassette sub-family C member 3 (1522 aa).

Topologically, residues 1 to 32 (MDRLCGSGELGSKFWDSNLTVYTNTPDLTPCF) are extracellular. A glycan (N-linked (GlcNAc...) asparagine) is linked at N18. A helical transmembrane segment spans residues 33 to 53 (QNSLLAWVPCIYLWAALPCYL). Topologically, residues 54 to 73 (FYLRHHRLGYIVLSCLSRLK) are cytoplasmic. A helical transmembrane segment spans residues 74 to 94 (TALGVLLWCISWVDLFYSFHG). Over 95–99 (LVHGS) the chain is Extracellular. The chain crosses the membrane as a helical span at residues 100 to 120 (SPAPVFFITPLLVGITMLLAT). The Cytoplasmic portion of the chain corresponds to 121 to 132 (LLIQYERLRGVR). A helical transmembrane segment spans residues 133 to 153 (SSGVLIIFWLLCVICAIIPFR). Residues 154–171 (SKILLALAEGKILDPFRF) are Extracellular-facing. A helical membrane pass occupies residues 172-192 (TTFYIYFALVLCAFILSCFQE). At 193–301 (KPPLFSPENL…KTKKPSFLRA (109 aa)) the chain is on the cytoplasmic side. A helical membrane pass occupies residues 302–322 (LVRTFTSSLLMGACFKLIQDL). Positions 310–592 (LLMGACFKLI…LPQLISGMTQ (283 aa)) constitute an ABC transmembrane type-1 1 domain. The Extracellular portion of the chain corresponds to 323 to 347 (SPSSTHSCSASSSGLFRPHGPYWWG). A helical transmembrane segment spans residues 348–368 (FLLAGLMFVSSTMQTLILHQH). Residues 369 to 424 (YHCIFVMALRIRTAIIGVIYRKALTITNSVKREYTVGEMVNLMSVDAQRFMDVSPF) lie on the Cytoplasmic side of the membrane. Residues 425–445 (INLLWSAPLQVILAIYFLWQI) traverse the membrane as a helical segment. The Extracellular portion of the chain corresponds to 446–448 (LGP). A helical membrane pass occupies residues 449–469 (SALAGVAVIVLLIPLNGAVSM). The Cytoplasmic segment spans residues 470–531 (KMKTYQVQQM…LLRKGAYLQA (62 aa)). The chain crosses the membrane as a helical span at residues 532-552 (ISTFIWVCTPFMVTLITLGVY). Residues 553-574 (VCVDKNNVLDAEKAFVSLSLFN) are Extracellular-facing. A helical transmembrane segment spans residues 575-595 (ILKIPLNLLPQLISGMTQTSV). Residues 596 to 958 (SLKRIQDFLN…VKLSVYWDYA (363 aa)) lie on the Cytoplasmic side of the membrane. The region spanning 625-849 (ITIHNGTFSW…DGSFANFLRN (225 aa)) is the ABC transporter 1 domain. 659-666 (GPVGCGKS) serves as a coordination point for ATP. S902 and S905 each carry phosphoserine. The chain crosses the membrane as a helical span at residues 959–979 (KSVGLCTTLFICLLYAGQNAV). Residues 966-1247 (TLFICLLYAG…MIRTLSDLES (282 aa)) enclose the ABC transmembrane type-1 2 domain. At 980–1016 (AIGANVWLSAWTNDVEEHGQQNNTSVRLGVYATLGIL) the chain is on the extracellular side. Residues N1001 and N1002 are each glycosylated (N-linked (GlcNAc...) asparagine). The helical transmembrane segment at 1017 to 1037 (QGLLVMLSAFTMVVGAIQAAR) threads the bilayer. The Cytoplasmic segment spans residues 1038–1080 (LLHTALLHNQIRAPQSFFDTTPSGRILNRFSKDIYVIHEVLAP). The chain crosses the membrane as a helical span at residues 1081-1101 (TILMLFNSFYTSISTIVVIVA). Residue S1102 is a topological domain, extracellular. A helical membrane pass occupies residues 1103–1123 (TPLFCVVVLPLAVFYGFVQRF). Over 1124-1194 (YVATSRQLKR…ASNRWLGVHV (71 aa)) the chain is Cytoplasmic. The helical transmembrane segment at 1195–1215 (EFVGNCVVLFSALFAVIGRNS) threads the bilayer. The Extracellular portion of the chain corresponds to 1216 to 1217 (LN). The chain crosses the membrane as a helical span at residues 1218–1238 (PGLVGLSVSYALQVTLSLNWM). Residues 1239 to 1522 (IRTLSDLESN…YGMAKDAGLA (284 aa)) lie on the Cytoplasmic side of the membrane. Residues 1286–1518 (FRNYSVRYRP…GGIFYGMAKD (233 aa)) form the ABC transporter 2 domain. 1318 to 1325 (GRTGAGKS) serves as a coordination point for ATP.

The protein belongs to the ABC transporter superfamily. ABCC family. Conjugate transporter (TC 3.A.1.208) subfamily. In terms of tissue distribution, expressed in lung, ileum, colon and liver. Higher in liver of Eisai hyperbilirubinemic rats.

Its subcellular location is the basolateral cell membrane. It is found in the basal cell membrane. It catalyses the reaction an S-substituted glutathione(in) + ATP + H2O = an S-substituted glutathione(out) + ADP + phosphate + H(+). The enzyme catalyses ATP + H2O + xenobioticSide 1 = ADP + phosphate + xenobioticSide 2.. It carries out the reaction taurocholate(in) + ATP + H2O = taurocholate(out) + ADP + phosphate + H(+). The catalysed reaction is glycocholate(in) + ATP + H2O = glycocholate(out) + ADP + phosphate + H(+). It catalyses the reaction taurolithocholate 3-sulfate(in) + ATP + H2O = taurolithocholate 3-sulfate(out) + ADP + phosphate + H(+). The enzyme catalyses 17beta-estradiol 17-O-(beta-D-glucuronate)(in) + ATP + H2O = 17beta-estradiol 17-O-(beta-D-glucuronate)(out) + ADP + phosphate + H(+). It carries out the reaction dehydroepiandrosterone 3-sulfate(in) + ATP + H2O = dehydroepiandrosterone 3-sulfate(out) + ADP + phosphate + H(+). The catalysed reaction is leukotriene C4(in) + ATP + H2O = leukotriene C4(out) + ADP + phosphate + H(+). It catalyses the reaction (4Z,15Z)-bilirubin IXalpha C8-beta-D-glucuronoside(in) + ATP + H2O = (4Z,15Z)-bilirubin IXalpha C8-beta-D-glucuronoside(out) + ADP + phosphate + H(+). The enzyme catalyses (4Z,15Z)-bilirubin IXalpha C8,C12-beta-D-bisglucuronoside(in) + ATP + H2O = (4Z,15Z)-bilirubin IXalpha C8,C12-beta-D-bisglucuronoside(out) + ADP + phosphate + H(+). It carries out the reaction taurochenodeoxycholate 3-sulfate(in) + ATP + H2O = taurochenodeoxycholate 3-sulfate(out) + ADP + phosphate + H(+). ATP-dependent transporter of the ATP-binding cassette (ABC) family that binds and hydrolyzes ATP to enable active transport of various substrates including many drugs, toxicants and endogenous compound across cell membranes. Transports glucuronide conjugates such as bilirubin diglucuronide, estradiol-17-beta-o-glucuronide and GSH conjugates such as leukotriene C4 (LTC4). Transports also various bile salts (taurocholate, glycocholate, taurochenodeoxycholate-3-sulfate, taurolithocholate- 3-sulfate). Does not contribute substantially to bile salt physiology but provides an alternative route for the export of bile acids and glucuronides from cholestatic hepatocytes. May contribute to regulate the transport of organic compounds in testes across the blood-testis-barrier. The protein is ATP-binding cassette sub-family C member 3 (Abcc3) of Rattus norvegicus (Rat).